The sequence spans 116 residues: NADH-ubiquinone oxidoreductase chain 3 (116 aa).

A run of 3 helical transmembrane segments spans residues 3 to 23 (LILAGLLIMSILSMILAMIAF), 56 to 76 (FFLVAILFLLFDLEIALLLPL), and 85 to 105 (PTLALTWTTSIIALLTLGLIH).

The protein belongs to the complex I subunit 3 family.

The protein localises to the mitochondrion membrane. It carries out the reaction a ubiquinone + NADH + 5 H(+)(in) = a ubiquinol + NAD(+) + 4 H(+)(out). In terms of biological role, core subunit of the mitochondrial membrane respiratory chain NADH dehydrogenase (Complex I) that is believed to belong to the minimal assembly required for catalysis. Complex I functions in the transfer of electrons from NADH to the respiratory chain. The immediate electron acceptor for the enzyme is believed to be ubiquinone. The polypeptide is NADH-ubiquinone oxidoreductase chain 3 (MT-ND3) (Latimeria chalumnae (Coelacanth)).